A 207-amino-acid polypeptide reads, in one-letter code: MHIRHLGLVDYEPTWHAMQAFTETRTGETPDELWIVEHPPVYTLGLAGKPEHLLQQTAIPLVKTDRGGQITYHGPGQLVVYLLMDLRRRDYGVRDMVRRIEQAIIDTLADYGIEARGDVNAPGVYVGARKIASLGLRIKNHATYHGLSLNVSMDLAPFGWINPCGYAGLEVTRMTDLGVEATLAQVAERLIPHLETRLARPQHETEA.

The 176-residue stretch at 27 to 202 folds into the BPL/LPL catalytic domain; that stretch reads GETPDELWIV…HLETRLARPQ (176 aa). Substrate contacts are provided by residues 66–73, 133–135, and 146–148; these read RGGQITYH, SLG, and GLS. Residue Cys164 is the Acyl-thioester intermediate of the active site.

Belongs to the LipB family.

It is found in the cytoplasm. It carries out the reaction octanoyl-[ACP] + L-lysyl-[protein] = N(6)-octanoyl-L-lysyl-[protein] + holo-[ACP] + H(+). It participates in protein modification; protein lipoylation via endogenous pathway; protein N(6)-(lipoyl)lysine from octanoyl-[acyl-carrier-protein]: step 1/2. Functionally, catalyzes the transfer of endogenously produced octanoic acid from octanoyl-acyl-carrier-protein onto the lipoyl domains of lipoate-dependent enzymes. Lipoyl-ACP can also act as a substrate although octanoyl-ACP is likely to be the physiological substrate. This chain is Octanoyltransferase, found in Laribacter hongkongensis (strain HLHK9).